The following is a 396-amino-acid chain: uncharacterized protein (396 aa).

It belongs to the mycobacterial PPE family.

This is an uncharacterized protein from Mycobacterium tuberculosis (strain CDC 1551 / Oshkosh).